The chain runs to 197 residues: Protein GrpE (197 aa).

Residues Met-1 to Arg-40 form a disordered region.

The protein belongs to the GrpE family. Homodimer.

It localises to the cytoplasm. Its function is as follows. Participates actively in the response to hyperosmotic and heat shock by preventing the aggregation of stress-denatured proteins, in association with DnaK and GrpE. It is the nucleotide exchange factor for DnaK and may function as a thermosensor. Unfolded proteins bind initially to DnaJ; upon interaction with the DnaJ-bound protein, DnaK hydrolyzes its bound ATP, resulting in the formation of a stable complex. GrpE releases ADP from DnaK; ATP binding to DnaK triggers the release of the substrate protein, thus completing the reaction cycle. Several rounds of ATP-dependent interactions between DnaJ, DnaK and GrpE are required for fully efficient folding. This is Protein GrpE from Shigella flexneri serotype 5b (strain 8401).